The following is a 73-amino-acid chain: UPF0352 protein APL_0584 (73 aa).

Belongs to the UPF0352 family.

This is UPF0352 protein APL_0584 from Actinobacillus pleuropneumoniae serotype 5b (strain L20).